The sequence spans 276 residues: UPF0328 protein ECU04_0100 (276 aa).

Residues 1–24 form a disordered region; sequence MGIIDVQRSHLTATPSKERDAPAH.

It belongs to the UPF0328 family.

The polypeptide is UPF0328 protein ECU04_0100 (Encephalitozoon cuniculi (strain GB-M1) (Microsporidian parasite)).